The following is a 405-amino-acid chain: Eukaryotic initiation factor 4A (405 aa).

The Q motif signature appears at 32 to 60 (PTFESMGLREELLRGIFNYGFEKPSAIQQ). One can recognise a Helicase ATP-binding domain in the interval 63-233 (ILPIIKGRDT…EKFMTKPVRI (171 aa)). ATP is bound at residue 76–83 (AQSGTGKT). Residues 181 to 184 (DEAD) carry the DEAD box motif. A Helicase C-terminal domain is found at 244 to 405 (GIKQFFVSVE…EMPVNFASII (162 aa)).

This sequence belongs to the DEAD box helicase family. eIF4A subfamily.

It localises to the cytoplasm. The catalysed reaction is ATP + H2O = ADP + phosphate + H(+). ATP-dependent RNA helicase which is a subunit of the eIF4F complex involved in cap recognition and is required for mRNA binding to ribosome. In the current model of translation initiation, eIF4A unwinds RNA secondary structures in the 5'-UTR of mRNAs which is necessary to allow efficient binding of the small ribosomal subunit, and subsequent scanning for the initiator codon. The chain is Eukaryotic initiation factor 4A (tifA) from Dictyostelium discoideum (Social amoeba).